The chain runs to 898 residues: MAKWVYTFGAGQAEGSAEDRDRLGGKGANLAEMCNLGLPVPPGLTIVTAACNSYLEKGRSMPEGLREQVREGITRMEKITGRVFGDTNRPLLLSVRSGARASMPGMMDTVLNLGLNDQSVHALGHDAGDARFAWDSYRRFIQMYGDVVMGVDHEVFEEVLEDEKARLGHEQDTELSAVEWQHVISRYKEAIEEVLGLPFPQDPEVQLWGAIGAVFSSWMNPRAITYRHLHGIPAGWGTAVNVQAMVFGNLGNSSATGVAFTRNPSTGEKELYGEFLVNAQGEDVVAGIRTPQNITEAARIASGSDKPSLEKLMPEAFAEFEKICNALERHYRDMQDIEFTIERGKLWMLQTRSGKRTAKSALKIAVDMAEEGLISKEEAVARIDPASLDQLLHPTIDPHARRDIIGSGLPASPGAATGEIVFSSDEAVQAVKEGRKVILVRVETSPEDIHGMHAAEGILTTRGGMTSHAAVVARGMGTPCVSGAGSIRVDQRNELLIAASVTLRKGDVITIDGSSGQVLKGEIPMLQPELSGDFGKIMQWADASRRMTVRTNAETPADARAARSFGAEGIGLCRTEHMFFEDDRINVMREMILAEDEAGRRTALAKLLPMQRSDFVELFSIMHGLPVTIRLLDPPLHEFLPKTDEEIAEVARVLTIDPAELRQRVDALHEFNPMLGHRGCRLAISYPEIAEMQARAIFEAAVQAAHDTGAAVVPEIMVPLVGLRAELDYVKARIEAVAKEVIGEAGVNIDYLIGTMIELPRAALRADTIAESADFFSFGTNDLTQTTFGISRDDAALFLATYQQKGIIEQDPFVSLDFEGVGELIQIAAERGRRTKNGLKLGICGEHGGDPASIRFCEEAGLDYVSCSPFRVPIARLAAAQATINGREVAEVQALAAS.

Residues 1–355 are N-terminal; sequence MAKWVYTFGA…LWMLQTRSGK (355 aa). Arg96 contributes to the ATP binding site. The tract at residues 356–412 is linker 1; that stretch reads RTAKSALKIAVDMAEEGLISKEEAVARIDPASLDQLLHPTIDPHARRDIIGSGLPAS. Residues 413 to 511 form a central region; that stretch reads PGAATGEIVF…TLRKGDVITI (99 aa). Phosphothreonine; by PDRP1 is present on Thr466. His468 acts as the Tele-phosphohistidine intermediate in catalysis. Positions 512 to 546 are linker 2; the sequence is DGSSGQVLKGEIPMLQPELSGDFGKIMQWADASRR. Positions 547–898 are C-terminal; sequence MTVRTNAETP…VAEVQALAAS (352 aa). Residues Arg574, Arg630, Glu758, Gly779, Thr780, Asn781, and Asp782 each contribute to the substrate site. Glu758 contacts Mg(2+). Asp782 contacts Mg(2+). Cys844 acts as the Proton donor in catalysis.

The protein belongs to the PEP-utilizing enzyme family. In terms of assembly, homodimer. The cofactor is Mg(2+). In terms of processing, phosphorylation of Thr-466 in the dark inactivates the enzyme. Dephosphorylation upon light stimulation reactivates the enzyme.

The catalysed reaction is pyruvate + phosphate + ATP = phosphoenolpyruvate + AMP + diphosphate + H(+). With respect to regulation, activated by light-induced dephosphorylation. Inhibited by dark-induced phosphorylation. Both reactions are catalyzed by PDRP1. Its function is as follows. Catalyzes the reversible phosphorylation of pyruvate and phosphate. This Rhizobium meliloti (strain 1021) (Ensifer meliloti) protein is Pyruvate, phosphate dikinase (ppdK).